A 420-amino-acid polypeptide reads, in one-letter code: Exodeoxyribonuclease 7 large subunit (420 aa).

Belongs to the XseA family. As to quaternary structure, heterooligomer composed of large and small subunits.

It localises to the cytoplasm. The enzyme catalyses Exonucleolytic cleavage in either 5'- to 3'- or 3'- to 5'-direction to yield nucleoside 5'-phosphates.. In terms of biological role, bidirectionally degrades single-stranded DNA into large acid-insoluble oligonucleotides, which are then degraded further into small acid-soluble oligonucleotides. This chain is Exodeoxyribonuclease 7 large subunit, found in Helicobacter pylori (strain J99 / ATCC 700824) (Campylobacter pylori J99).